Here is a 312-residue protein sequence, read N- to C-terminus: DNA-directed RNA polymerase subunit alpha (312 aa).

Residues 1 to 229 (MLQYQIDRIE…ELFQPLATVT (229 aa)) form an alpha N-terminal domain (alpha-NTD) region. Residues 246-312 (IPLEELNLSV…ISIPQSRTSA (67 aa)) are alpha C-terminal domain (alpha-CTD).

Belongs to the RNA polymerase alpha chain family. In terms of assembly, in cyanobacteria the RNAP catalytic core is composed of 2 alpha, 1 beta, 1 beta', 1 gamma and 1 omega subunit. When a sigma factor is associated with the core the holoenzyme is formed, which can initiate transcription.

The enzyme catalyses RNA(n) + a ribonucleoside 5'-triphosphate = RNA(n+1) + diphosphate. Its function is as follows. DNA-dependent RNA polymerase catalyzes the transcription of DNA into RNA using the four ribonucleoside triphosphates as substrates. The sequence is that of DNA-directed RNA polymerase subunit alpha from Parasynechococcus marenigrum (strain WH8102).